The chain runs to 538 residues: MNLELLESFGQNYPEEADGTLDCISMALTCTFNRWGTLLAVGCNDGRIVIWDFLTRGIAKIISAHIHPVCSLCWSRDGHKLVSASTDNIVSQWDVLSGDCDQRFRFPSPILKVQYHPRDQNKVLVCPMKSAPVMLTLSDSKHVVLPVDDDSDLNVVASFDRRGEYIYTGNAKGKILVLKTDSQDLVASFRVTTGTSNTTAIKSIEFARKGSCFLINTADRIIRVYDGREILTCGRDGEPEPMQKLQDLVNRTPWKKCCFSGDGEYIVAGSARQHALYIWEKSIGNLVKILHGTRGELLLDVAWHPVRPIIASISSGVVSIWAQNQVENWSAFAPDFKELDENVEYEERESEFDIEDEDKSEPEQTGADAAEDEEVDVTSVDPIAAFCSSDEELEDSKALLYLPIAPEVEDPEENPYGPPPDAVPSSLMDEGASSEKKRQSSADGSQPPKKKPKTTNIELQGVPNDEVHPLLGVKGDGKSKKKQAGRPKGSKGKEKDSPFKPKLYKGDRGLPLEGSTKGKVQAELSQSLAAGGAISELL.

WD repeat units follow at residues 22–63 and 64–103; these read DCIS…KIIS and AHIH…CDQR. K129 participates in a covalent cross-link: Glycyl lysine isopeptide (Lys-Gly) (interchain with G-Cter in SUMO2). 4 WD repeats span residues 148–188, 196–235, 249–291, and 293–331; these read DDDS…LVAS, SNTT…TCGR, VNRT…KILH, and TRGE…NWSA. T252 bears the Phosphothreonine; by CDK1 mark. Residues 330–366 are interaction with ASH2L; sequence SAFAPDFKELDENVEYEERESEFDIEDEDKSEPEQTG. Residues 344–360 show a composition bias toward acidic residues; the sequence is EYEERESEFDIEDEDKS. The disordered stretch occupies residues 344–377; sequence EYEERESEFDIEDEDKSEPEQTGADAAEDEEVDV. S350 is subject to Phosphoserine. The interaction with WDR5 stretch occupies residues 371–380; it reads EDEEVDVTSV. Phosphoserine is present on residues S388 and S389. Residues 408-519 form a disordered region; it reads VEDPEENPYG…LPLEGSTKGK (112 aa). The segment covering 479 to 490 has biased composition (basic residues); that stretch reads SKKKQAGRPKGS. A compositionally biased stretch (basic and acidic residues) spans 491-510; sequence KGKEKDSPFKPKLYKGDRGL. S497 is modified (phosphoserine; by CDK1). A Phosphoserine modification is found at S525.

Component of the SET1 complex, at least composed of the catalytic subunit (SETD1A or SETD1B), WDR5, WDR82, RBBP5, ASH2L/ASH2, CXXC1/CFP1, HCFC1 and DPY30. Core component of several methyltransferase-containing complexes including MLL1/MLL, MLL2/3 (also named ASCOM complex) and MLL4/WBP7. Each complex is at least composed of ASH2L, RBBP5, WDR5, DPY30, one or more specific histone methyltransferases (KMT2A/MLL1, KMT2D/MLL2, KMT2C/MLL3 and KMT2B/MLL4), and the facultative components PAGR1, BACC1, CHD8, E2F6, HCFC1, HCFC2, HSP70, INO80C, KDM6A, KANSL1, LAS1L, MAX, MCRS1, MEN1, MGA, MYST1/MOF, NCOA6, PAXIP1/PTIP, PELP1, PHF20, PRP31, RING2, RUVB1/TIP49A, RUVB2/TIP49B, SENP3, TAF1, TAF4, TAF6, TAF7, TAF9, TEX10 and alpha- and beta-tubulin. Component of a histone methylation complex composed of at least ZNF335, RBBP5, ASH2L and WDR5; the complex may have histone H3-specific methyltransferase activity, however does not have specificity for 'Lys-4' of histone H3. Interacts with ZNF335. Interacts with ASH2L; the interaction is direct. Interacts with WDR5; the interaction is direct. Components of the ZNF335-RBBP5-ASH2L-WDR5 histone methylation complex may associate with components of a nuclear receptor-mediated transcription complex to form a complex at least composed of ZNF335, HCFC1, CCAR2, EMSY, MKI67, RBBP5, ASH2L and WDR5. Within this complex interacts with EMSY. Found in a complex with RBBP5, ASH2L, DPY30, KMT2A, KMT2D and WDR5. Interacts with SETD1A. Interacts with WDR82.

The protein resides in the nucleus. In terms of biological role, in embryonic stem (ES) cells, plays a crucial role in the differentiation potential, particularly along the neural lineage, regulating gene induction and H3 'Lys-4' methylation at key developmental loci, including that mediated by retinoic acid. Does not affect ES cell self-renewal. Component or associated component of some histone methyltransferase complexes which regulates transcription through recruitment of those complexes to gene promoters. As part of the MLL1/MLL complex, involved in mono-, di- and trimethylation at 'Lys-4' of histone H3. Histone H3 'Lys-4' methylation represents a specific tag for epigenetic transcriptional activation. In association with ASH2L and WDR5, stimulates the histone methyltransferase activities of KMT2A, KMT2B, KMT2C, KMT2D, SETD1A and SETD1B. The polypeptide is Retinoblastoma-binding protein 5 (Rbbp5) (Mus musculus (Mouse)).